The following is a 101-amino-acid chain: Small ribosomal subunit protein uS14 (101 aa).

Over residues 1–10 (MAKKSSIEKN) the composition is skewed to basic and acidic residues. The tract at residues 1–23 (MAKKSSIEKNNRRKRMTGNAAAK) is disordered.

The protein belongs to the universal ribosomal protein uS14 family. Part of the 30S ribosomal subunit. Contacts proteins S3 and S10.

Its function is as follows. Binds 16S rRNA, required for the assembly of 30S particles and may also be responsible for determining the conformation of the 16S rRNA at the A site. This Nitrobacter hamburgensis (strain DSM 10229 / NCIMB 13809 / X14) protein is Small ribosomal subunit protein uS14.